Reading from the N-terminus, the 613-residue chain is tRNA 5-methylaminomethyl-2-thiouridine biosynthesis bifunctional protein MnmC (613 aa).

The tRNA (mnm(5)s(2)U34)-methyltransferase stretch occupies residues Met1–Glu225. Positions Ile252–Leu613 are FAD-dependent cmnm(5)s(2)U34 oxidoreductase.

The protein in the N-terminal section; belongs to the methyltransferase superfamily. tRNA (mnm(5)s(2)U34)-methyltransferase family. In the C-terminal section; belongs to the DAO family. It depends on FAD as a cofactor.

The protein localises to the cytoplasm. It carries out the reaction 5-aminomethyl-2-thiouridine(34) in tRNA + S-adenosyl-L-methionine = 5-methylaminomethyl-2-thiouridine(34) in tRNA + S-adenosyl-L-homocysteine + H(+). In terms of biological role, catalyzes the last two steps in the biosynthesis of 5-methylaminomethyl-2-thiouridine (mnm(5)s(2)U) at the wobble position (U34) in tRNA. Catalyzes the FAD-dependent demodification of cmnm(5)s(2)U34 to nm(5)s(2)U34, followed by the transfer of a methyl group from S-adenosyl-L-methionine to nm(5)s(2)U34, to form mnm(5)s(2)U34. This is tRNA 5-methylaminomethyl-2-thiouridine biosynthesis bifunctional protein MnmC from Campylobacter jejuni subsp. jejuni serotype O:2 (strain ATCC 700819 / NCTC 11168).